We begin with the raw amino-acid sequence, 109 residues long: uncharacterized protein (109 aa).

This is an uncharacterized protein from Caenorhabditis elegans.